The following is a 149-amino-acid chain: UPF0178 protein Mmwyl1_2258 (149 aa).

This sequence belongs to the UPF0178 family.

In Marinomonas sp. (strain MWYL1), this protein is UPF0178 protein Mmwyl1_2258.